The chain runs to 156 residues: MPRRRRAVIREVAPDAIYNSTLVEKFVNSMMWQGKKNTAQGIFYDAMDKIRERTSDDPLKAFKKAVENAKPLLEVKTRRVGGANYQVPIEVPQNRRTSLAMRWIITNARTRPEKGMAEKLANELNDAANLRGGAIKKRDDVHRMAEANKAFAHYRW.

This sequence belongs to the universal ribosomal protein uS7 family. As to quaternary structure, part of the 30S ribosomal subunit. Contacts proteins S9 and S11.

In terms of biological role, one of the primary rRNA binding proteins, it binds directly to 16S rRNA where it nucleates assembly of the head domain of the 30S subunit. Is located at the subunit interface close to the decoding center, probably blocks exit of the E-site tRNA. The polypeptide is Small ribosomal subunit protein uS7 (Solibacter usitatus (strain Ellin6076)).